A 486-amino-acid chain; its full sequence is Glutamyl-tRNA(Gln) amidotransferase subunit A (486 aa).

Active-site charge relay system residues include lysine 75 and serine 150. Serine 174 serves as the catalytic Acyl-ester intermediate.

Belongs to the amidase family. GatA subfamily. As to quaternary structure, heterotrimer of A, B and C subunits.

The enzyme catalyses L-glutamyl-tRNA(Gln) + L-glutamine + ATP + H2O = L-glutaminyl-tRNA(Gln) + L-glutamate + ADP + phosphate + H(+). In terms of biological role, allows the formation of correctly charged Gln-tRNA(Gln) through the transamidation of misacylated Glu-tRNA(Gln) in organisms which lack glutaminyl-tRNA synthetase. The reaction takes place in the presence of glutamine and ATP through an activated gamma-phospho-Glu-tRNA(Gln). The sequence is that of Glutamyl-tRNA(Gln) amidotransferase subunit A from Nostoc punctiforme (strain ATCC 29133 / PCC 73102).